A 146-amino-acid chain; its full sequence is Large ribosomal subunit protein uL15 (146 aa).

Positions 1–58 (MNLSNLRAPKKANRNRKRVGRGMGSGHGKTSTRGHKGQRSRSGSRSMRGFEGGQMPLH) are disordered. Basic residues-rich tracts occupy residues 8 to 20 (APKK…KRVG) and 30 to 39 (TSTRGHKGQR). Positions 40–49 (SRSGSRSMRG) are enriched in low complexity.

It belongs to the universal ribosomal protein uL15 family. As to quaternary structure, part of the 50S ribosomal subunit.

Its function is as follows. Binds to the 23S rRNA. This chain is Large ribosomal subunit protein uL15, found in Acidobacterium capsulatum (strain ATCC 51196 / DSM 11244 / BCRC 80197 / JCM 7670 / NBRC 15755 / NCIMB 13165 / 161).